The following is a 95-amino-acid chain: Toxin HigB-1 (95 aa).

Toxic component of a type II toxin-antitoxin (TA) system. Inhibits translation by cleavage of mRNA. The polypeptide is Toxin HigB-1 (higB-1) (Vibrio cholerae serotype O1 (strain ATCC 39315 / El Tor Inaba N16961)).